The sequence spans 271 residues: Phosphoglycerate mutase-like protein (271 aa).

The active-site Tele-phosphohistidine intermediate is His-22. Glu-134 functions as the Proton donor/acceptor in the catalytic mechanism. Residues 252-271 (SAETTNYPGKVPEGLDNPSG) are disordered.

It belongs to the phosphoglycerate mutase family. Expressed in the shoot apical meristem and meristematic zone of the root tips.

In terms of biological role, may play a role in carbohydrates metabolism. The protein is Phosphoglycerate mutase-like protein of Arabidopsis thaliana (Mouse-ear cress).